Reading from the N-terminus, the 735-residue chain is Phosphoribosylformylglycinamidine synthase subunit PurL (735 aa).

His-50 is an active-site residue. Tyr-53 and Lys-92 together coordinate ATP. Mg(2+) is bound at residue Glu-94. Residues 95–98 and Arg-117 each bind substrate; that span reads SHNH. The active-site Proton acceptor is His-96. Asp-118 is a binding site for Mg(2+). Residue Gln-241 coordinates substrate. Asp-269 serves as a coordination point for Mg(2+). 313–315 contacts substrate; the sequence is ESQ. Positions 495 and 532 each coordinate ATP. Residue Asn-533 participates in Mg(2+) binding. Ser-535 is a binding site for substrate.

Belongs to the FGAMS family. As to quaternary structure, monomer. Part of the FGAM synthase complex composed of 1 PurL, 1 PurQ and 2 PurS subunits.

Its subcellular location is the cytoplasm. It carries out the reaction N(2)-formyl-N(1)-(5-phospho-beta-D-ribosyl)glycinamide + L-glutamine + ATP + H2O = 2-formamido-N(1)-(5-O-phospho-beta-D-ribosyl)acetamidine + L-glutamate + ADP + phosphate + H(+). Its pathway is purine metabolism; IMP biosynthesis via de novo pathway; 5-amino-1-(5-phospho-D-ribosyl)imidazole from N(2)-formyl-N(1)-(5-phospho-D-ribosyl)glycinamide: step 1/2. Functionally, part of the phosphoribosylformylglycinamidine synthase complex involved in the purines biosynthetic pathway. Catalyzes the ATP-dependent conversion of formylglycinamide ribonucleotide (FGAR) and glutamine to yield formylglycinamidine ribonucleotide (FGAM) and glutamate. The FGAM synthase complex is composed of three subunits. PurQ produces an ammonia molecule by converting glutamine to glutamate. PurL transfers the ammonia molecule to FGAR to form FGAM in an ATP-dependent manner. PurS interacts with PurQ and PurL and is thought to assist in the transfer of the ammonia molecule from PurQ to PurL. This chain is Phosphoribosylformylglycinamidine synthase subunit PurL, found in Bartonella henselae (strain ATCC 49882 / DSM 28221 / CCUG 30454 / Houston 1) (Rochalimaea henselae).